We begin with the raw amino-acid sequence, 1433 residues long: DNA-directed RNA polymerase subunit beta' (1433 aa).

Zn(2+) contacts are provided by cysteine 66, cysteine 68, cysteine 81, and cysteine 84. 3 residues coordinate Mg(2+): aspartate 473, aspartate 475, and aspartate 477. Residues cysteine 815, cysteine 889, cysteine 896, and cysteine 899 each coordinate Zn(2+).

It belongs to the RNA polymerase beta' chain family. In terms of assembly, the RNAP catalytic core consists of 2 alpha, 1 beta, 1 beta' and 1 omega subunit. When a sigma factor is associated with the core the holoenzyme is formed, which can initiate transcription. Mg(2+) serves as cofactor. Requires Zn(2+) as cofactor.

The catalysed reaction is RNA(n) + a ribonucleoside 5'-triphosphate = RNA(n+1) + diphosphate. Its function is as follows. DNA-dependent RNA polymerase catalyzes the transcription of DNA into RNA using the four ribonucleoside triphosphates as substrates. This Porphyromonas gingivalis (strain ATCC 33277 / DSM 20709 / CIP 103683 / JCM 12257 / NCTC 11834 / 2561) protein is DNA-directed RNA polymerase subunit beta'.